A 368-amino-acid chain; its full sequence is UDP-N-acetylglucosamine--N-acetylmuramyl-(pentapeptide) pyrophosphoryl-undecaprenol N-acetylglucosamine transferase (368 aa).

UDP-N-acetyl-alpha-D-glucosamine is bound by residues 11-13, asparagine 123, arginine 164, serine 188, isoleucine 250, and glutamine 295; that span reads TGG.

The protein belongs to the glycosyltransferase 28 family. MurG subfamily.

Its subcellular location is the cell inner membrane. The catalysed reaction is di-trans,octa-cis-undecaprenyl diphospho-N-acetyl-alpha-D-muramoyl-L-alanyl-D-glutamyl-meso-2,6-diaminopimeloyl-D-alanyl-D-alanine + UDP-N-acetyl-alpha-D-glucosamine = di-trans,octa-cis-undecaprenyl diphospho-[N-acetyl-alpha-D-glucosaminyl-(1-&gt;4)]-N-acetyl-alpha-D-muramoyl-L-alanyl-D-glutamyl-meso-2,6-diaminopimeloyl-D-alanyl-D-alanine + UDP + H(+). The protein operates within cell wall biogenesis; peptidoglycan biosynthesis. Its function is as follows. Cell wall formation. Catalyzes the transfer of a GlcNAc subunit on undecaprenyl-pyrophosphoryl-MurNAc-pentapeptide (lipid intermediate I) to form undecaprenyl-pyrophosphoryl-MurNAc-(pentapeptide)GlcNAc (lipid intermediate II). This chain is UDP-N-acetylglucosamine--N-acetylmuramyl-(pentapeptide) pyrophosphoryl-undecaprenol N-acetylglucosamine transferase, found in Solidesulfovibrio magneticus (strain ATCC 700980 / DSM 13731 / RS-1) (Desulfovibrio magneticus).